A 346-amino-acid polypeptide reads, in one-letter code: Enkurin domain-containing protein 1 (346 aa).

Residues 1-35 (MCEGPSRISGPIPPDPTLCPDNYRRPTSAQGRLEG) are disordered. Serine 91 carries the phosphoserine modification. The required for binding to microtubules stretch occupies residues 91–171 (SLKRKDPKDH…AHFLRAHSRC (81 aa)). Positions 114 to 125 (RFREQERSREQG) are enriched in basic and acidic residues. 3 disordered regions span residues 114-137 (RFRE…WRSP), 167-197 (AHSR…EPGL), and 260-280 (AEAR…TRMP). Serine 136 carries the post-translational modification Phosphoserine. The span at 174-190 (GLPPPHVSSPQPTPPGP) shows a compositional bias: pro residues. The region spanning 251–343 (ERRDLWRREA…IFSRPKVFVK (93 aa)) is the Enkurin domain.

Interacts with alpha-tubulin. Interacts (via central region) with CCP110 (via N-terminal region); competes with CEP97 for binding to CCP110.

It localises to the cytoplasm. It is found in the cytoskeleton. The protein localises to the microtubule organizing center. Its subcellular location is the centrosome. The protein resides in the centriole. It localises to the cilium basal body. It is found in the cell projection. The protein localises to the cilium. Its subcellular location is the spindle. The protein resides in the spindle pole. It localises to the cilium axoneme. In terms of biological role, microtubule-binding protein which regulates microtubule organization and stability. Promotes the stability of astral microtubules and facilitates the proper orientation of the mitotic spindle. This allows the oriented division of basal keratinocytes and contributes to epidermal stratification. Required for the assembly of both primary and motile cilia. Destabilizes the interaction between CCP110 and CEP97 by competing with CEP97 for binding to CCP110 which promotes the removal of CCP110 and CEP97 from the mother centriole and allows the initiation of ciliogenesis. The sequence is that of Enkurin domain-containing protein 1 (ENKD1) from Homo sapiens (Human).